Reading from the N-terminus, the 103-residue chain is Large ribosomal subunit protein bL21 (103 aa).

This sequence belongs to the bacterial ribosomal protein bL21 family. In terms of assembly, part of the 50S ribosomal subunit. Contacts protein L20.

This protein binds to 23S rRNA in the presence of protein L20. The polypeptide is Large ribosomal subunit protein bL21 (Clostridium kluyveri (strain NBRC 12016)).